The following is a 3071-amino-acid chain: Intermembrane lipid transfer protein vps1301 (3071 aa).

The Chorein N-terminal domain occupies 2–115 (LEGLVAGLLN…QQALKQEQLD (114 aa)). Positions 2143-2415 (HIEIFSPYII…KYSWDYPCCA (273 aa)) constitute an SHR-BD domain.

This sequence belongs to the VPS13 family.

The protein localises to the golgi apparatus. It is found in the trans-Golgi network. Mediates the transfer of lipids between membranes at organelle contact sites. May play a role in mitochondrial lipid homeostasis, Golgi vesicle transport, reticulophagy, actin cytoskeleton organization and formation of the forespore membrane. This is Intermembrane lipid transfer protein vps1301 from Schizosaccharomyces pombe (strain 972 / ATCC 24843) (Fission yeast).